The primary structure comprises 404 residues: Probable tRNA sulfurtransferase (404 aa).

A THUMP domain is found at histidine 60–asparagine 165. ATP-binding positions include methionine 183–leucine 184, histidine 208–phenylalanine 209, arginine 265, glycine 287, and glutamine 296.

This sequence belongs to the ThiI family.

It is found in the cytoplasm. The catalysed reaction is [ThiI sulfur-carrier protein]-S-sulfanyl-L-cysteine + a uridine in tRNA + 2 reduced [2Fe-2S]-[ferredoxin] + ATP + H(+) = [ThiI sulfur-carrier protein]-L-cysteine + a 4-thiouridine in tRNA + 2 oxidized [2Fe-2S]-[ferredoxin] + AMP + diphosphate. The enzyme catalyses [ThiS sulfur-carrier protein]-C-terminal Gly-Gly-AMP + S-sulfanyl-L-cysteinyl-[cysteine desulfurase] + AH2 = [ThiS sulfur-carrier protein]-C-terminal-Gly-aminoethanethioate + L-cysteinyl-[cysteine desulfurase] + A + AMP + 2 H(+). Its pathway is cofactor biosynthesis; thiamine diphosphate biosynthesis. In terms of biological role, catalyzes the ATP-dependent transfer of a sulfur to tRNA to produce 4-thiouridine in position 8 of tRNAs, which functions as a near-UV photosensor. Also catalyzes the transfer of sulfur to the sulfur carrier protein ThiS, forming ThiS-thiocarboxylate. This is a step in the synthesis of thiazole, in the thiamine biosynthesis pathway. The sulfur is donated as persulfide by IscS. This is Probable tRNA sulfurtransferase from Streptococcus agalactiae serotype III (strain NEM316).